The following is a 593-amino-acid chain: uncharacterized protein (593 aa).

This is an uncharacterized protein from Sinorhizobium fredii (strain NBRC 101917 / NGR234).